The following is a 79-amino-acid chain: ATP synthase subunit 9, mitochondrial (79 aa).

2 helical membrane passes run 21-41 and 59-79; these read SGLI…ILAF and FALT…ILFI.

This sequence belongs to the ATPase C chain family. In terms of assembly, F-type ATPases have 2 components, CF(1) - the catalytic core - and CF(0) - the membrane proton channel. CF(1) has five subunits: alpha(3), beta(3), gamma(1), delta(1), epsilon(1). CF(0) has three main subunits: a, b and c.

It is found in the mitochondrion membrane. Functionally, mitochondrial membrane ATP synthase (F(1)F(0) ATP synthase or Complex V) produces ATP from ADP in the presence of a proton gradient across the membrane which is generated by electron transport complexes of the respiratory chain. F-type ATPases consist of two structural domains, F(1) - containing the extramembraneous catalytic core and F(0) - containing the membrane proton channel, linked together by a central stalk and a peripheral stalk. During catalysis, ATP synthesis in the catalytic domain of F(1) is coupled via a rotary mechanism of the central stalk subunits to proton translocation. Part of the complex F(0) domain. A homomeric c-ring of probably 10 subunits is part of the complex rotary element. In Acanthamoeba castellanii (Amoeba), this protein is ATP synthase subunit 9, mitochondrial (ATP9).